Here is a 101-residue protein sequence, read N- to C-terminus: Albumin (101 aa).

Albumin domains lie at 1 to 80 and 81 to 101; these read DAEH…AFXY and ESGA…PDVL. His4 is a binding site for Cu cation.

This sequence belongs to the ALB/AFP/VDB family. As to expression, plasma.

The protein localises to the secreted. Binds water, Ca(2+), Na(+), K(+), fatty acids, hormones, bilirubin and drugs. Its main function is the regulation of the colloidal osmotic pressure of blood. The sequence is that of Albumin (alb) from Neoceratodus forsteri (Australian lungfish).